The chain runs to 282 residues: Ribosome-inactivating protein bryodin II (282 aa).

An N-terminal signal peptide occupies residues 1 to 21; the sequence is MRSIGFYSVLALYVGAHVTED. N-linked (GlcNAc...) asparagine glycosylation occurs at N25. E183 is a catalytic residue.

The protein belongs to the ribosome-inactivating protein family. Type 1 RIP subfamily.

It catalyses the reaction Endohydrolysis of the N-glycosidic bond at one specific adenosine on the 28S rRNA.. Functionally, ribosome-inactivating protein of type 1, inhibits protein synthesis in animal cells. This is Ribosome-inactivating protein bryodin II from Bryonia dioica (Red bryony).